A 160-amino-acid polypeptide reads, in one-letter code: S-ribosylhomocysteine lyase (160 aa).

3 residues coordinate Fe cation: His-57, His-61, and Cys-127.

This sequence belongs to the LuxS family. As to quaternary structure, homodimer. The cofactor is Fe cation.

The enzyme catalyses S-(5-deoxy-D-ribos-5-yl)-L-homocysteine = (S)-4,5-dihydroxypentane-2,3-dione + L-homocysteine. Functionally, involved in the synthesis of autoinducer 2 (AI-2) which is secreted by bacteria and is used to communicate both the cell density and the metabolic potential of the environment. The regulation of gene expression in response to changes in cell density is called quorum sensing. Catalyzes the transformation of S-ribosylhomocysteine (RHC) to homocysteine (HC) and 4,5-dihydroxy-2,3-pentadione (DPD). In Streptococcus sanguinis (strain SK36), this protein is S-ribosylhomocysteine lyase.